Consider the following 330-residue polypeptide: Tryptophan--tRNA ligase (330 aa).

ATP-binding positions include 10–12 (QTT) and 18–19 (GN). Positions 11-19 (TTGALHLGN) match the 'HIGH' region motif. An L-tryptophan-binding site is contributed by D134. Residues 146–148 (GED), I186, and 195–199 (KMSKS) contribute to the ATP site. The short motif at 195–199 (KMSKS) is the 'KMSKS' region element.

It belongs to the class-I aminoacyl-tRNA synthetase family. Homodimer.

It localises to the cytoplasm. The enzyme catalyses tRNA(Trp) + L-tryptophan + ATP = L-tryptophyl-tRNA(Trp) + AMP + diphosphate + H(+). Its function is as follows. Catalyzes the attachment of tryptophan to tRNA(Trp). The polypeptide is Tryptophan--tRNA ligase (Rickettsia typhi (strain ATCC VR-144 / Wilmington)).